We begin with the raw amino-acid sequence, 364 residues long: Peptide chain release factor 1 (364 aa).

N5-methylglutamine is present on Gln232.

The protein belongs to the prokaryotic/mitochondrial release factor family. Methylated by PrmC. Methylation increases the termination efficiency of RF1.

Its subcellular location is the cytoplasm. Functionally, peptide chain release factor 1 directs the termination of translation in response to the peptide chain termination codons UAG and UAA. The chain is Peptide chain release factor 1 from Sorangium cellulosum (strain So ce56) (Polyangium cellulosum (strain So ce56)).